The sequence spans 363 residues: S-adenosylmethionine:tRNA ribosyltransferase-isomerase (363 aa).

This sequence belongs to the QueA family. In terms of assembly, monomer.

It is found in the cytoplasm. It carries out the reaction 7-aminomethyl-7-carbaguanosine(34) in tRNA + S-adenosyl-L-methionine = epoxyqueuosine(34) in tRNA + adenine + L-methionine + 2 H(+). It functions in the pathway tRNA modification; tRNA-queuosine biosynthesis. In terms of biological role, transfers and isomerizes the ribose moiety from AdoMet to the 7-aminomethyl group of 7-deazaguanine (preQ1-tRNA) to give epoxyqueuosine (oQ-tRNA). This is S-adenosylmethionine:tRNA ribosyltransferase-isomerase from Haemophilus influenzae (strain ATCC 51907 / DSM 11121 / KW20 / Rd).